We begin with the raw amino-acid sequence, 681 residues long: Cryptochrome-1 (681 aa).

A CNT1, binds chromophores to sense blue light and mediate CRY dimerization region spans residues 1 to 489; sequence MSGSVSGCGS…AKARLHEALS (489 aa). The Photolyase/cryptochrome alpha/beta domain occupies 12-141; the sequence is GCSIVWFRRD…AVRSFNADLL (130 aa). A disulfide bridge links cysteine 80 with cysteine 190. Tyrosine 235 lines the FAD pocket. Position 238 (asparagine 238) interacts with Mg(2+). An ATP-binding site is contributed by arginine 239. Residues lysine 241, serine 244, and threonine 246 each contribute to the Mg(2+) site. FAD is bound by residues 247 to 251 and serine 293; that span reads TSFLS. Histidine 358 contributes to the Mg(2+) binding site. FAD-binding positions include aspartate 359 and 390–392; that span reads DAD. Residue 359–360 coordinates ATP; the sequence is DR. Residue aspartate 409 participates in ATP binding. Residues 490–681 form a CCT1/CCE1, mediates blue light signaling region; the sequence is QMWQLEAASR…LNWRRLSQTG (192 aa). 2 disordered regions span residues 525–598 and 616–664; these read RDIT…EPAS and STED…TSSY. The segment covering 583 to 598 has biased composition (polar residues); it reads MVNTNQAQQRRAEPAS. Residue serine 616 is modified to Phosphoserine. Threonine 621 bears the Phosphothreonine mark.

It belongs to the DNA photolyase class-1 family. Homodimer. Interacts with ADO1, COP1 and PHYA. Interacts specifically with the dark/far-red (Pr) state of PHYB, but not with the red light-activated (Pfr). Interacts with PIF4 and PIF5 in the nucleus in response to low blue light (LBL). Binds to SPA1 and SPA4 in response to blue light, this interaction prevents SPA1/COP1 complex formation and thus avoid COP1-dependent degradation of the transcription factor HY5 by the proteasome and promotes hypocotyl elongation. Interacts with TCP2. Binding to ATP mediates conformational changes which facilitate flavin binding. FAD is required as a cofactor. (6R)-5,10-methylene-5,6,7,8-tetrahydrofolate serves as cofactor. Autophosphorylated; in response to blue light and when in complex with FAD cofactor. Kinase activity is optimal in the presence of magnesium ions, about 30 percent of the optimal activity in the presence of manganese ions, but inactive with calcium ions. Adopts an open conformation when phosphorylated upon photoexcitation and thus interacts with signaling partner proteins. In terms of tissue distribution, widely expressed. Expressed in the aerial tissues (e.g. cotyledons and leaf primordia), but not detected in the roots.

The protein resides in the cytoplasm. It localises to the nucleus. It is found in the PML body. Light exposure induces a conformational change in the C-terminal domain CCT1 required for activity. Photoreceptor that mediates primarily blue light inhibition of hypocotyl elongation and photoperiodic control of floral initiation, and regulates other light responses, including circadian rhythms, tropic growth, stomata opening, guard cell development, root development, bacterial and viral pathogen responses, abiotic stress responses, cell cycles, programmed cell death, apical dominance, fruit and ovule development, seed dormancy, and magnetoreception. Photoexcited cryptochromes interact with signaling partner proteins to alter gene expression at both transcriptional and post-translational levels and, consequently, regulate the corresponding metabolic and developmental programs. Blue-light absorbing flavoprotein that activates reversible flavin photoreduction via an electron transport chain comprising a tryptophan triad (W-324, W-377 and W-400), accompanied by a large conformational change upon photoexcitation, or via an alternative electron transport that involves small metabolites, including NADPH, NADH, and ATP. The half-life of the activated signaling state is about 5 minutes. Also involved in the detection of blue/green ratio in light (shade under leaf canopies) and subsequent adaptations on plant growth and development. In darkness, the dark reoxidation of flavin occurs and leads to inactivated state. Perceives low blue light (LBL) and responds by directly contacting two bHLH transcription factors, PIF4 and PIF5, at chromatin on E-box variant 5'-CA[CT]GTG-3' to promote their activity and stimulate specific gene expression to adapt global physiology (e.g. hypocotyl elongation and hyponastic growth in low blue light). When activated by high-intensity blue light, catalyzes direct enzymatic conversion of molecular oxygen O(2) to reactive oxygen species (ROS) and hydrogen peroxide H(2)O(2) in vitro. ROS accumulation upon activation by blue light leads to cell death in protoplasts. Seems essential for blue-light-triggered and singlet oxygen-mediated programmed cell death (PCD). Required for the induction of nuclear genes encoding photoprotective components by GATA24 and GATA28 in extreme light intensities that exceed the electron utilization capacity of the chloroplast. Involved in shortening the circadian clock period, especially at 27 degrees Celsius, in blue light (BL) and required to maintain clock genes expression rhythm. Mediates blue light-induced gene expression and hypocotyl elongation through the inhibition of COP1-mediated degradation of the transcription factors BIT1 and HY5 and via the activation of anion channels at the plasma membrane, probably via auxin signaling. Required for the hypocotyl hook formation in darkness. Involved in blue light-dependent stomatal opening, CHS gene expression, transpiration, inhibition of stem growth and increase of root growth, probably by regulating abscisic acid (ABA). Prevents lateral roots growth by inhibiting auxin transport. Necessary for shade avoidance syndrome (SAS), characterized by leaf hyponasty and reduced lamina/petiole ratio, when exposed to blue light attenuation. Together with phototropins, involved in phototropism regulation by various blue light fluence; blue light attenuates phototropism in high fluence rates (100 umol.m-2.s-1) but enhances phototropism in low fluence rates (&lt;1.0 umol.m-2.s-1). Required for blue/UV-A wavelengths-mediated inhibition of explants shoot regeneration in vitro (e.g. new shoot apical meristems regeneration from excised cotyledons). Modulates anthocyanin accumulation in a PHYA-dependent manner in far-red-light. Acts as a PHYA/PHYB-dependent modulator of chlorophyll accumulation in red light. Contributes to most blue light deetiolation responses. May act as a chemical magnetoreceptor, via magnetically sensitive kinetics and quantum yields of photo-induced flavin / tryptophan radical pairs. The effect of near-null magnetic field on flowering is altered by changes of blue light cycle and intensity in a CRY1/CRY2-dependent manner. Involved in the strigolactone signaling that regulates hypocotyl growth in response to blue light. Modulates temperature-dependent growth and physiology maintenance, especially at warm ambient temperatures (e.g. 27 degrees Celsius) and in white light and low-light conditions, via HFR1-dependent activity; this process requires PTAC12/HMR/PAP5 (transcriptional transactivator). Its function is as follows. Implicated in promoting R protein-mediated resistance to Pseudomonas syringae pv. tomato (Pst.) DC3000 under continuous light conditions. Promotes systemic acquired resistance (SAR) and PR gene expression triggered by P.syringae. The protein is Cryptochrome-1 of Arabidopsis thaliana (Mouse-ear cress).